The following is a 453-amino-acid chain: Bifunctional protein GlmU (453 aa).

The tract at residues 1 to 225 (MNIVILAAGT…EWETLGVNSK (225 aa)) is pyrophosphorylase. Residues 6-9 (LAAG), Lys-20, Gln-71, 76-77 (GT), 98-100 (YGD), Gly-135, Glu-150, Asn-165, and Asn-223 each bind UDP-N-acetyl-alpha-D-glucosamine. Asp-100 lines the Mg(2+) pocket. A Mg(2+)-binding site is contributed by Asn-223. Residues 226–246 (AQLAELERIHQRNLADALLAA) are linker. The N-acetyltransferase stretch occupies residues 247–453 (GVTLADPARI…GYVRPVKKKS (207 aa)). UDP-N-acetyl-alpha-D-glucosamine contacts are provided by Arg-329 and Lys-347. His-359 acts as the Proton acceptor in catalysis. Tyr-362 and Asn-373 together coordinate UDP-N-acetyl-alpha-D-glucosamine. Acetyl-CoA is bound by residues Ala-376, 382–383 (NY), Ser-401, and Ala-419.

This sequence in the N-terminal section; belongs to the N-acetylglucosamine-1-phosphate uridyltransferase family. In the C-terminal section; belongs to the transferase hexapeptide repeat family. As to quaternary structure, homotrimer. Mg(2+) serves as cofactor.

It is found in the cytoplasm. It carries out the reaction alpha-D-glucosamine 1-phosphate + acetyl-CoA = N-acetyl-alpha-D-glucosamine 1-phosphate + CoA + H(+). It catalyses the reaction N-acetyl-alpha-D-glucosamine 1-phosphate + UTP + H(+) = UDP-N-acetyl-alpha-D-glucosamine + diphosphate. It participates in nucleotide-sugar biosynthesis; UDP-N-acetyl-alpha-D-glucosamine biosynthesis; N-acetyl-alpha-D-glucosamine 1-phosphate from alpha-D-glucosamine 6-phosphate (route II): step 2/2. Its pathway is nucleotide-sugar biosynthesis; UDP-N-acetyl-alpha-D-glucosamine biosynthesis; UDP-N-acetyl-alpha-D-glucosamine from N-acetyl-alpha-D-glucosamine 1-phosphate: step 1/1. It functions in the pathway bacterial outer membrane biogenesis; LPS lipid A biosynthesis. Its function is as follows. Catalyzes the last two sequential reactions in the de novo biosynthetic pathway for UDP-N-acetylglucosamine (UDP-GlcNAc). The C-terminal domain catalyzes the transfer of acetyl group from acetyl coenzyme A to glucosamine-1-phosphate (GlcN-1-P) to produce N-acetylglucosamine-1-phosphate (GlcNAc-1-P), which is converted into UDP-GlcNAc by the transfer of uridine 5-monophosphate (from uridine 5-triphosphate), a reaction catalyzed by the N-terminal domain. The sequence is that of Bifunctional protein GlmU from Burkholderia mallei (strain NCTC 10247).